An 86-amino-acid chain; its full sequence is Large ribosomal subunit protein bL31B (86 aa).

This sequence belongs to the bacterial ribosomal protein bL31 family. Type B subfamily. As to quaternary structure, part of the 50S ribosomal subunit.

The chain is Large ribosomal subunit protein bL31B from Vibrio parahaemolyticus serotype O3:K6 (strain RIMD 2210633).